Consider the following 637-residue polypeptide: Chaperone protein HtpG (637 aa).

Residues 1-345 (MSQQETHGFQ…SNDLPLNVSR (345 aa)) form an a; substrate-binding region. Residues 346 to 562 (EILQDNHITK…EGEMSTQMIK (217 aa)) form a b region. Positions 563-637 (LMQAAGQPVP…MNQMLLANLK (75 aa)) are c.

Belongs to the heat shock protein 90 family. In terms of assembly, homodimer.

Its subcellular location is the cytoplasm. In terms of biological role, molecular chaperone. Has ATPase activity. The chain is Chaperone protein HtpG from Shewanella oneidensis (strain ATCC 700550 / JCM 31522 / CIP 106686 / LMG 19005 / NCIMB 14063 / MR-1).